The sequence spans 72 residues: Translation initiation factor IF-1 (72 aa).

The S1-like domain maps to 1 to 72; the sequence is MAKSDVIEME…SKGRIVYRAR (72 aa).

It belongs to the IF-1 family. As to quaternary structure, component of the 30S ribosomal translation pre-initiation complex which assembles on the 30S ribosome in the order IF-2 and IF-3, IF-1 and N-formylmethionyl-tRNA(fMet); mRNA recruitment can occur at any time during PIC assembly.

It localises to the cytoplasm. In terms of biological role, one of the essential components for the initiation of protein synthesis. Stabilizes the binding of IF-2 and IF-3 on the 30S subunit to which N-formylmethionyl-tRNA(fMet) subsequently binds. Helps modulate mRNA selection, yielding the 30S pre-initiation complex (PIC). Upon addition of the 50S ribosomal subunit IF-1, IF-2 and IF-3 are released leaving the mature 70S translation initiation complex. This is Translation initiation factor IF-1 from Marinobacter nauticus (strain ATCC 700491 / DSM 11845 / VT8) (Marinobacter aquaeolei).